A 1246-amino-acid polypeptide reads, in one-letter code: MLVLHFNLYEAQILPHERLATSVFLEHGPLQVTSFNPTTTTGYVVYVNSPNASFLEPVLSKLFQSVSPKLPFFKFSEQTLSFSYGPHLQGSQTTFSKDLVDVVKNLSMFTPQGPENAFTVERIEYYRTIHIICDLKDPKKRHIRHLQKMLCNPYTGLTNFVIPQDKRLEMDVLDAESAVSAPLSDPLWTMSNGLFNLLGYSSQYSVFKRGAAPKVFVEKNSRLAISMNIDYWNPWSSTNMLYDGLHAIEKGLIYSFGSFTPTPSLTSVFNMAQHWYVPMFSACQIGHVMQLPLQTHELSLTGSLPMKMLQAHLNLLKCSSMPHIQGFFRLVPKDLSHILPQTKIYNGFISTSLCLQTINMANEHPLQDKTYLYQLGNFFTYHKQFLTCQESGKEIGSILTALAFFLDSVKTYPGTIVGMSTSLPVASMKAKLAAVCQQVCGARLLVSALPPQVVAKLAPFSPSNRVENKKMLKQYFFNLLTSDLIIAIKNVNIDAQAALKTACYMAGCRFKKIGLLTHLKGTEVVDNTVERPYPILRFDRFKPKFPLLSSPTSITFLEERINWQDLNLRDTILKILEHPSVGCKEFIVNHTDKLISGRVARTSIVGPWQLPVSDYSILVPMHPCTTEEVRENPWDYETDIDSHCVFEEAAVAGICSAIGESTILTQADLKVGTIRAITEAILNLSMVPWNNIGNIVIQLSITLPYTAHVSTYLQLVMETAKTFCEALRVSCTFTANATEGGASIVASAIVNTLDVSKCITPDLKFNNSFLFLLTTEKDYSLFGSVAQQILEKTFIGEIPSATSPVMLKKMLSVLQTLIKDESVVSGHDVSDGGLVATVAEMALSGGKGVRVYVPHGEDAIKFLCSETPGVVIEVQGSKMYYVQQFLHSENINFQIIGESTSSLTFSISQNLTKLVHEPLELFKSAWRSFSDACEPCQIHPRPYRMQIATVPKYCPVGPCRFHTVIVYLLPNNSVPHGLLNAIEEAGFQPRLVSIHQPSKTTNVYDPHTVWGFFIVGASNVQDEDVGMRALIAQLKSHVAFQRDLRTMLAKPDVFSVAIGALACELLFYNKAIGYNKPSDTYMTCVKNSSRKFESRWSNIYIPESTKAIAFQSLKNSLIPCWTQGTHLKFYHPKPMLEKMEESGMVSSMFYGHSLSSGPAQNYPLTPNGENAIAGVCSADGRHLALLHDPSLCNNLWQWPYVPLENPPLKVSPWKTMFLDLHKWGITVQGASPPPSRTSDPLRSFVF.

Its subcellular location is the virion tegument. The chain is Probable membrane antigen 3 (3) from Saimiri sciureus (Common squirrel monkey).